We begin with the raw amino-acid sequence, 320 residues long: Aspartate carbamoyltransferase catalytic subunit (320 aa).

Positions 68 and 69 each coordinate carbamoyl phosphate. Lys96 is an L-aspartate binding site. Positions 118, 148, and 151 each coordinate carbamoyl phosphate. 2 residues coordinate L-aspartate: Arg181 and Arg236. Residues Gly277 and Pro278 each contribute to the carbamoyl phosphate site.

This sequence belongs to the aspartate/ornithine carbamoyltransferase superfamily. ATCase family. In terms of assembly, heterododecamer (2C3:3R2) of six catalytic PyrB chains organized as two trimers (C3), and six regulatory PyrI chains organized as three dimers (R2).

The enzyme catalyses carbamoyl phosphate + L-aspartate = N-carbamoyl-L-aspartate + phosphate + H(+). The protein operates within pyrimidine metabolism; UMP biosynthesis via de novo pathway; (S)-dihydroorotate from bicarbonate: step 2/3. Its function is as follows. Catalyzes the condensation of carbamoyl phosphate and aspartate to form carbamoyl aspartate and inorganic phosphate, the committed step in the de novo pyrimidine nucleotide biosynthesis pathway. The chain is Aspartate carbamoyltransferase catalytic subunit from Polaromonas sp. (strain JS666 / ATCC BAA-500).